Here is a 114-residue protein sequence, read N- to C-terminus: Lectin MVL (114 aa).

Copy 1 of the repeat occupies 2-55 (ASYKVNIPAGPLWSNAEAQQVGPKIAAAHQGNFTGQWTTVVESAMSVVEVELQV). Residues 12-16 (PLWSN), Q20, and 36-44 (GQWTTVVES) each bind a carbohydrate. The linker stretch occupies residues 56–60 (ENTGI). Repeat 2 spans residues 61 to 114 (HEFKTDVLAGPLWSNDEAQKLGPQIAASYGAEFTGQWRTIVEGVMSVIQIKYTF). A carbohydrate-binding positions include 71 to 75 (PLWSN), Q79, and 95 to 103 (GQWRTIVEG).

In terms of assembly, homodimer.

Its subcellular location is the cytoplasm. Functionally, carbohydrate-binding protein that binds oligomannosides such as Man(6)GlcNAc(2) with sub-micromolar affinities. The specificity of MVL is unique in that its minimal target comprises the Man-alpha-(1-&gt;6)-Man-beta-(1-&gt;4)-GlcNAc-beta-(1-&gt;4)-GlcNAc tetrasaccharide core (Man(2)A) found in N-linked oligomannosides. Displays hemagglutininating activity on rabbit, horse and hen erythrocytes. This activity is inhibited by yeast mannan. Does not bind mono- and disaccharides. Inhibits HIV-1 envelope-mediated cell fusion at nanomolar concentrations through carbohydrate-mediated interactions with high-mannose residues on the surface of the HIV envelope glycoprotein gp120. Its function is as follows. Unexpectedly for a lectin, one of the 2 oligomannose binding sites of MVL can catalyze the cleavage of chitin fragments (such as chitotriose, i.e. GlcNAc(3) or GlcNAc-beta-(1-&gt;4)-GlcNAcbeta-(1-&gt;4)-GlcNAc, and chitotetraose, i.e. GlcNAc(4)) to GlcNAc. This weak beta-1,4-glycosidase activity is restricted to the C-terminal carbohydrate-binding site. Does not cleave Man(3)GlcNAc(2) or the tetrasaccharide Man(2)A. This Microcystis viridis (Polycystis viridis) protein is Lectin MVL (mvl).